The following is a 396-amino-acid chain: Na(+)/H(+) antiporter NhaA (396 aa).

11 helical membrane-spanning segments follow: residues 14–34 (ASGI…NSGL), 59–79 (LLLW…GLEV), 95–115 (TFPA…YTFF), 124–144 (AGWA…MALL), 154–174 (VFLL…IALF), 178–198 (QLSL…LWMN), 205–225 (IGLY…SGVH), 254–274 (ALHP…NAGV), 278–298 (GIGL…GLFV), 328–348 (IFAV…IASL), and 363–383 (LGIL…LRMS).

This sequence belongs to the NhaA Na(+)/H(+) (TC 2.A.33) antiporter family.

It localises to the cell inner membrane. It catalyses the reaction Na(+)(in) + 2 H(+)(out) = Na(+)(out) + 2 H(+)(in). In terms of biological role, na(+)/H(+) antiporter that extrudes sodium in exchange for external protons. The protein is Na(+)/H(+) antiporter NhaA of Aeromonas salmonicida (strain A449).